The primary structure comprises 274 residues: uncharacterized protein (274 aa).

The protein belongs to the class IV-like SAM-binding methyltransferase superfamily. RNA methyltransferase TrmH family.

This is an uncharacterized protein from Synechocystis sp. (strain ATCC 27184 / PCC 6803 / Kazusa).